Consider the following 307-residue polypeptide: Glutathione synthetase (307 aa).

Residues 120–304 (KLGALRFSRW…LADQTIERLR (185 aa)) form the ATP-grasp domain. 146-202 (AREQGDVVLKPLGGRAGLGVIRVQAEAPGLKALLELVTEQERLPVMAQRFLPDVTEG) serves as a coordination point for ATP. Residues glutamate 275 and asparagine 277 each coordinate Mg(2+).

Belongs to the prokaryotic GSH synthase family. Requires Mg(2+) as cofactor. The cofactor is Mn(2+).

The enzyme catalyses gamma-L-glutamyl-L-cysteine + glycine + ATP = glutathione + ADP + phosphate + H(+). It participates in sulfur metabolism; glutathione biosynthesis; glutathione from L-cysteine and L-glutamate: step 2/2. The polypeptide is Glutathione synthetase (Parasynechococcus marenigrum (strain WH8102)).